The sequence spans 388 residues: Pyruvate dehydrogenase E1 component subunit alpha, testis-specific form, mitochondrial (388 aa).

A mitochondrion-targeting transit peptide spans 1-27; sequence MLAAFISRVLRRVAQKSARRVLVASRN. Pyruvate contacts are provided by His90, Tyr116, Arg117, Gly163, Val165, Asp194, Gly195, Ala196, Asn223, and Tyr225. Thiamine diphosphate-binding residues include Tyr116, Arg117, Gly163, Val165, Asp194, Gly195, Ala196, and Asn223. Residue Asp194 participates in Mg(2+) binding. Asn223 and Tyr225 together coordinate Mg(2+). His290 is a thiamine diphosphate binding site. Ser291 bears the Phosphoserine; by PDK1, PDK2, PDK3 and PDK4 mark. Ser293 is modified (phosphoserine). Phosphoserine; by PDK3 is present on Ser298.

As to quaternary structure, heterotetramer of two PDHA2 and two PDHB subunits. The heterotetramer interacts with DLAT, and is part of the multimeric pyruvate dehydrogenase complex that contains multiple copies of pyruvate dehydrogenase (E1), dihydrolipoamide acetyltransferase (DLAT, E2) and lipoamide dehydrogenase (DLD, E3). These subunits are bound to an inner core composed of about 48 DLAT and 12 PDHX molecules. Requires thiamine diphosphate as cofactor. It depends on Mg(2+) as a cofactor. In terms of processing, phosphorylation at Ser-291, Ser-293 and Ser-298 by PDK family kinases inactivates the enzyme; for this phosphorylation at a single site is sufficient. Phosphorylation at Ser-293 interferes with access to active site, and thereby inactivates the enzyme. Dephosphorylation at all three sites, i.e. at Ser-291, Ser-293 and Ser-298, is required for reactivation. In terms of tissue distribution, testis. Expressed in postmeiotic spermatogenic cells.

It is found in the mitochondrion matrix. It carries out the reaction N(6)-[(R)-lipoyl]-L-lysyl-[protein] + pyruvate + H(+) = N(6)-[(R)-S(8)-acetyldihydrolipoyl]-L-lysyl-[protein] + CO2. Pyruvate dehydrogenase activity is inhibited by phosphorylation of PDHA2; it is reactivated by dephosphorylation. In terms of biological role, the pyruvate dehydrogenase complex catalyzes the overall conversion of pyruvate to acetyl-CoA and CO(2), and thereby links the glycolytic pathway to the tricarboxylic cycle. In Homo sapiens (Human), this protein is Pyruvate dehydrogenase E1 component subunit alpha, testis-specific form, mitochondrial (PDHA2).